The chain runs to 463 residues: Immune-associated nucleotide-binding protein 10 (463 aa).

Residues 3–211 (EPIKNIVLVG…YTYQLHRKIK (209 aa)) enclose the AIG1-type G domain. A G1 region spans residues 12 to 19 (GRTGNGKS). GTP contacts are provided by residues 12-20 (GRTGNGKSS) and serine 33. The segment at 39–43 (GVTMI) is G2. Positions 61-64 (DTPG) are G3. The G4 stretch occupies residues 131–134 (TGGD). The G5 stretch occupies residues 170 to 172 (DNK). Asparagine 171 provides a ligand contact to GTP. Residues 173–308 (SKDEKKKVEQ…KQLIAQANRM (136 aa)) adopt a coiled-coil conformation.

Belongs to the TRAFAC class TrmE-Era-EngA-EngB-Septin-like GTPase superfamily. AIG1/Toc34/Toc159-like paraseptin GTPase family. IAN subfamily. Expressed in radicles of the germinating seeds.

This is Immune-associated nucleotide-binding protein 10 from Arabidopsis thaliana (Mouse-ear cress).